Consider the following 89-residue polypeptide: Small ribosomal subunit protein uS15 (89 aa).

This sequence belongs to the universal ribosomal protein uS15 family. In terms of assembly, part of the 30S ribosomal subunit. Forms a bridge to the 50S subunit in the 70S ribosome, contacting the 23S rRNA.

Its function is as follows. One of the primary rRNA binding proteins, it binds directly to 16S rRNA where it helps nucleate assembly of the platform of the 30S subunit by binding and bridging several RNA helices of the 16S rRNA. In terms of biological role, forms an intersubunit bridge (bridge B4) with the 23S rRNA of the 50S subunit in the ribosome. In Cellvibrio japonicus (strain Ueda107) (Pseudomonas fluorescens subsp. cellulosa), this protein is Small ribosomal subunit protein uS15.